The chain runs to 822 residues: Glycerol-3-phosphate acyltransferase (822 aa).

The HXXXXD motif motif lies at Cys304–Met309.

This sequence belongs to the GPAT/DAPAT family.

It localises to the cell inner membrane. It catalyses the reaction sn-glycerol 3-phosphate + an acyl-CoA = a 1-acyl-sn-glycero-3-phosphate + CoA. It participates in phospholipid metabolism; CDP-diacylglycerol biosynthesis; CDP-diacylglycerol from sn-glycerol 3-phosphate: step 1/3. This is Glycerol-3-phosphate acyltransferase from Yersinia enterocolitica serotype O:8 / biotype 1B (strain NCTC 13174 / 8081).